The following is a 767-amino-acid chain: Ribonucleoside-diphosphate reductase subunit alpha (767 aa).

Positions M1 to R30 are disordered. The segment covering P9–H26 has biased composition (polar residues). Residues I31–V120 form the ATP-cone domain. Residues T228, S243–C244, G272, N460–E464, and P631–S635 each bind substrate. C244 and C478 are disulfide-bonded. N460 serves as the catalytic Proton acceptor. Catalysis depends on C462, which acts as the Cysteine radical intermediate. Residue E464 is the Proton acceptor of the active site.

Belongs to the ribonucleoside diphosphate reductase large chain family. As to quaternary structure, tetramer of two alpha and two beta subunits.

The catalysed reaction is a 2'-deoxyribonucleoside 5'-diphosphate + [thioredoxin]-disulfide + H2O = a ribonucleoside 5'-diphosphate + [thioredoxin]-dithiol. With respect to regulation, under complex allosteric control mediated by deoxynucleoside triphosphates and ATP binding. The type of nucleotide bound at the specificity site determines substrate preference. It seems probable that ATP makes the enzyme reduce CDP and UDP, dGTP favors ADP reduction and dTTP favors GDP reduction. Its function is as follows. Provides the precursors necessary for DNA synthesis. Catalyzes the biosynthesis of deoxyribonucleotides from the corresponding ribonucleotides. The sequence is that of Ribonucleoside-diphosphate reductase subunit alpha (nrdA) from Synechocystis sp. (strain ATCC 27184 / PCC 6803 / Kazusa).